The sequence spans 161 residues: Arachidonate 5-lipoxygenase-activating protein (161 aa).

Topologically, residues 1-8 (MDQETVGN) are lumenal. Residues 9-30 (VVLLAIVTLISVVQNGFFAHKV) traverse the membrane as a helical segment. The Cytoplasmic portion of the chain corresponds to 31 to 52 (EHESRTQNGRSFQRTGTLAFER). The chain crosses the membrane as a helical span at residues 53 to 77 (VYTANQNCVDAYPTFLAVLWSAGLL). Over 78–80 (CSQ) the chain is Lumenal. Residues 81 to 102 (VPAAFAGLMYLFVRQKYFVGYL) traverse the membrane as a helical segment. At 103-107 (GERTQ) the chain is on the cytoplasmic side. The stretch at 108 to 115 (STPGYIFG) is an intramembrane region. Residues 116-128 (KRIILFLFLMSVA) form a helical membrane-spanning segment. The Lumenal segment spans residues 129 to 161 (GIFNYYLIFFFGSDFENYIKTISTTISPLLLIP).

The protein belongs to the MAPEG family. In terms of assembly, homotrimer. Interacts with LTC4S and ALOX5.

It localises to the nucleus membrane. It is found in the endoplasmic reticulum membrane. Functionally, required for leukotriene biosynthesis by ALOX5 (5-lipoxygenase). Anchors ALOX5 to the membrane. Binds arachidonic acid, and could play an essential role in the transfer of arachidonic acid to ALOX5. Binds to MK-886, a compound that blocks the biosynthesis of leukotrienes. The chain is Arachidonate 5-lipoxygenase-activating protein (ALOX5AP) from Homo sapiens (Human).